We begin with the raw amino-acid sequence, 281 residues long: 32 kDa heat shock protein (281 aa).

Over residues Glu-142–Ile-168 the composition is skewed to acidic residues. Residues Glu-142–Asn-281 form a disordered region. Residues Lys-180–Val-209 show a composition bias toward basic and acidic residues. The segment covering Lys-210–Glu-273 has biased composition (low complexity).

The polypeptide is 32 kDa heat shock protein (hspC) (Dictyostelium discoideum (Social amoeba)).